The chain runs to 205 residues: G-protein coupled receptor (205 aa).

5 helical membrane passes run 40–60 (GITL…MILY), 71–91 (FYVI…FFMT), 107–127 (LVYF…AIIA), 151–171 (IGIL…FVQI), and 185–205 (LSSP…SFIW). Cysteines 105 and 181 form a disulfide.

The protein belongs to the G-protein coupled receptor 1 family.

It localises to the host membrane. The polypeptide is G-protein coupled receptor (U12) (Human herpesvirus 6B (strain Z29) (HHV-6 variant B)).